The chain runs to 554 residues: Transcription factor 7-like 1-A (554 aa).

The span at 1-11 shows a compositional bias: gly residues; the sequence is MPQLNSGGGDE. Residues 1 to 61 form an interaction with CTNNB1-A region; it reads MPQLNSGGGD…SENHSSDSDS (61 aa). Disordered stretches follow at residues 1-73, 183-213, and 391-475; these read MPQL…REAF, GTPP…PYYP, and WSAR…LTTK. Basic and acidic residues-rich tracts occupy residues 17–32 and 52–73; these read ELIR…EKSP and SENH…REAF. The interval 109-312 is interaction with AES and TLE4-A; the sequence is LGGHYLPNGA…SPNLHTKSNM (204 aa). A DNA-binding region (HMG box) is located at residues 324-392; that stretch reads IKKPLNAFML…LHSQLYPSWS (69 aa). Basic and acidic residues predominate over residues 407 to 416; it reads KQSPEMETHT. The interaction with CTBP-B stretch occupies residues 408–554; that stretch reads QSPEMETHTK…PLSLVTKSSD (147 aa). A compositionally biased stretch (low complexity) spans 445–464; sequence SPATPSAALASPAAPAATHS. Polar residues predominate over residues 465 to 474; that stretch reads EQAQPLSLTT.

Belongs to the TCF/LEF family. Interacts with csnk1e, ctnnb1-A, ctbp-B, dact1-A and gsk3b. May interact with ase and tle4-A. In terms of processing, phosphorylated. Phosphorylation by csnk1e promotes binding to ctnnb1-A while phosphorylation by gsk3b may reverse this effect.

Its subcellular location is the cytoplasm. The protein resides in the nucleus. Its function is as follows. Participates in the Wnt signaling pathway. Binds to DNA and acts as a repressor in the absence of ctnnb1-A and possibly ctnnb1-B, and as an activator in the presence of these proteins. Required early in development for the establishment of the dorsal body axis in response to maternal Wnt signaling. Also required during development of the CNS for the establishment of dorsal-ventral patterning in the prospective diencephalon. The polypeptide is Transcription factor 7-like 1-A (tcf7l1-a) (Xenopus laevis (African clawed frog)).